The sequence spans 708 residues: Kelch-like protein 11 (708 aa).

The N-terminal stretch at 1 to 15 (MAAAAVAAAAAAAAA) is a signal peptide. The tract at residues 47–70 (DFGPGPGISAMEASGGDPGPEAED) is disordered. The 77-residue stretch at 94-170 (CDITLCFGGA…MYTGRIRVST (77 aa)) folds into the BTB domain. In terms of domain architecture, BACK spans 205–307 (CVAIHSLAHM…KPTYLTRHVK (103 aa)). 5 Kelch repeats span residues 360–407 (VIMV…VTES), 408–453 (YVYV…EVKG), 455–501 (LYSI…AIED), 503–556 (FVYI…VVNS), and 610–661 (DVFI…HVRI). A Phosphoserine modification is found at serine 465.

As to quaternary structure, component of a cullin-RING-based BCR (BTB-CUL3-RBX1) E3 ubiquitin-protein ligase complex. Homodimer. Interacts with CUL3.

In terms of biological role, component of a cullin-RING-based BCR (BTB-CUL3-RBX1) E3 ubiquitin-protein ligase complex that mediates the ubiquitination of target proteins, leading most often to their proteasomal degradation. In Homo sapiens (Human), this protein is Kelch-like protein 11 (KLHL11).